The chain runs to 262 residues: uncharacterized protein (262 aa).

The ABC transporter domain occupies 5-223 (IKVENLTKYF…MAYIEYLDNG (219 aa)). 37–44 (GHNGAGKT) provides a ligand contact to ATP.

The protein belongs to the ABC transporter superfamily.

This is an uncharacterized protein from Methanocaldococcus jannaschii (strain ATCC 43067 / DSM 2661 / JAL-1 / JCM 10045 / NBRC 100440) (Methanococcus jannaschii).